The sequence spans 444 residues: D(2) dopamine receptor (444 aa).

At 1–37 the chain is on the extracellular side; that stretch reads MDPLNLSWYDDDLERQNWSRPFNGSEGKPDRPHYNYY. Asn5, Asn17, and Asn23 each carry an N-linked (GlcNAc...) asparagine glycan. A helical membrane pass occupies residues 38–60; sequence AMLLTLLIFIIVFGNVLVCMAVS. Over 61-70 the chain is Cytoplasmic; that stretch reads REKALQTTTN. A helical transmembrane segment spans residues 71–93; that stretch reads YLIVSLAVADLLVATLVMPWVVY. The Extracellular segment spans residues 94-108; that stretch reads LEVVGEWKFSRIHCD. An intrachain disulfide couples Cys107 to Cys182. A helical transmembrane segment spans residues 109–130; sequence IFVTLDVMMCTASILNLCAISI. Over 131–151 the chain is Cytoplasmic; sequence DRYTAVAMPMLYNTRYSSKRR. The chain crosses the membrane as a helical span at residues 152–172; sequence VTVMIAIVWVLSFTISCPLLF. Residues 173–188 are Extracellular-facing; that stretch reads GLNNTDQNECIIANPA. A helical transmembrane segment spans residues 189–213; it reads FVVYSSIVSFYVPFIVTLLVYIKIY. The tract at residues 211 to 374 is interaction with PPP1R9B; sequence KIYIVLRKRR…SQQKEKKATQ (164 aa). Residues 214–374 lie on the Cytoplasmic side of the membrane; that stretch reads IVLRKRRKRV…SQQKEKKATQ (161 aa). The tract at residues 282 to 329 is disordered; sequence EMLSSTSPPERTRYSPIPPSHHQLTLPDPSHHGLHSNPDSPAKPEKNG. Residues 375–396 form a helical membrane-spanning segment; the sequence is MLAIVLGVFIICWLPFFITHIL. The Extracellular portion of the chain corresponds to 397 to 410; it reads NIHCDCNIPPVLYS. Cys400 and Cys402 form a disulfide bridge. The chain crosses the membrane as a helical span at residues 411-432; sequence AFTWLGYVNSAVNPIIYTTFNI. The Cytoplasmic portion of the chain corresponds to 433–444; the sequence is EFRKAFMKILHC. The S-palmitoyl cysteine moiety is linked to residue Cys444.

It belongs to the G-protein coupled receptor 1 family. In terms of assembly, forms homo- and heterooligomers with DRD4. The interaction with DRD4 may modulate agonist-induced downstream signaling. Interacts with CADPS and CADPS2. Interacts with GPRASP1, PPP1R9B and CLIC6. Interacts with ARRB2. Interacts with HTR2A. Interacts with DRD1. As to quaternary structure, interacts with KCNA2. Palmitoylated. Palmitoylation which is required for proper localization to the plasma membrane and stability of the receptor could be carried on by ZDHHC4, ZDHHC3 and ZDHHC8. Expressed in retinal hyaloid vessels at postnatal day 6. In terms of tissue distribution, expressed in the pituitary gland, stratum, brain stem and cortex. As to expression, expressed in the brain stem.

The protein resides in the cell membrane. It is found in the golgi apparatus membrane. Its function is as follows. Dopamine receptor whose activity is mediated by G proteins which inhibit adenylyl cyclase. Positively regulates postnatal regression of retinal hyaloid vessels via suppression of VEGFR2/KDR activity, downstream of OPN5. This chain is D(2) dopamine receptor (Drd2), found in Mus musculus (Mouse).